We begin with the raw amino-acid sequence, 176 residues long: Dual-action ribosomal maturation protein DarP (176 aa).

Residues 1–16 are compositionally biased toward acidic residues; sequence MRLIDPDADLEFDPDS. The segment at 1–29 is disordered; the sequence is MRLIDPDADLEFDPDSVYDGPSKSQKKRE.

The protein belongs to the DarP family.

It localises to the cytoplasm. Functionally, member of a network of 50S ribosomal subunit biogenesis factors which assembles along the 30S-50S interface, preventing incorrect 23S rRNA structures from forming. Promotes peptidyl transferase center (PTC) maturation. The chain is Dual-action ribosomal maturation protein DarP from Thiobacillus denitrificans (strain ATCC 25259 / T1).